The sequence spans 340 residues: Probable HTH-type transcriptional regulator EndR (340 aa).

The HTH lacI-type domain maps to 1-58 (MVTTMKEVAERAGVSKSTVSQFLQKRYNYMSENTKKKIEQAIEDLSYIPNEVARSLKQ). Positions 5-24 (MKEVAERAGVSKSTVSQFLQ) form a DNA-binding region, H-T-H motif.

Functionally, putative repressor of the endoglucanase operon. The polypeptide is Probable HTH-type transcriptional regulator EndR (endR) (Paenibacillus polymyxa (Bacillus polymyxa)).